The chain runs to 227 residues: Enolase-phosphatase E1 (227 aa).

It belongs to the HAD-like hydrolase superfamily. MasA/MtnC family. As to quaternary structure, monomer. The cofactor is Mg(2+).

The catalysed reaction is 5-methylsulfanyl-2,3-dioxopentyl phosphate + H2O = 1,2-dihydroxy-5-(methylsulfanyl)pent-1-en-3-one + phosphate. Its pathway is amino-acid biosynthesis; L-methionine biosynthesis via salvage pathway; L-methionine from S-methyl-5-thio-alpha-D-ribose 1-phosphate: step 3/6. It functions in the pathway amino-acid biosynthesis; L-methionine biosynthesis via salvage pathway; L-methionine from S-methyl-5-thio-alpha-D-ribose 1-phosphate: step 4/6. Its function is as follows. Bifunctional enzyme that catalyzes the enolization of 2,3-diketo-5-methylthiopentyl-1-phosphate (DK-MTP-1-P) into the intermediate 2-hydroxy-3-keto-5-methylthiopentenyl-1-phosphate (HK-MTPenyl-1-P), which is then dephosphorylated to form the acireductone 1,2-dihydroxy-3-keto-5-methylthiopentene (DHK-MTPene). The polypeptide is Enolase-phosphatase E1 (Methylococcus capsulatus (strain ATCC 33009 / NCIMB 11132 / Bath)).